A 780-amino-acid chain; its full sequence is Striatin (780 aa).

The stretch at 53–120 forms a coiled coil; that stretch reads LHFLQHEWAR…QERAKYHKLK (68 aa). Residues 55–63 are caveolin-binding; it reads FLQHEWARF. The segment at 123 to 150 is disordered; the sequence is TELNQGDMKPPSYDSDEGNETEVQPQQN. The residue at position 137 (Ser-137) is a Phosphoserine. The tract at residues 149–166 is calmodulin-binding; it reads QNSQLMWKQGRQLLRQYL. The residue at position 225 (Thr-225) is a Phosphothreonine. Phosphoserine is present on residues Ser-227, Ser-229, Ser-245, and Ser-259. Disordered regions lie at residues 289–312, 334–353, and 364–392; these read DFLV…DWEK, EQYK…NRSK, and VDEL…ELSR. The span at 299–312 shows a compositional bias: basic and acidic residues; sequence NESRSAGDGTDWEK. Residues 338 to 351 show a composition bias toward basic residues; that stretch reads KERKGKKGVKRPNR. WD repeat units follow at residues 461 to 500, 514 to 553, 567 to 606, 662 to 701, 704 to 743, and 750 to 780; these read SHFD…PAKK, AHKG…VDPY, GHTD…PALS, SSSC…LIHS, AHLE…CIQE, and KFEE…KVFV.

This sequence belongs to the WD repeat striatin family. As to quaternary structure, part of the core of STRIPAK complexes composed of PP2A catalytic and scaffolding subunits, the striatins (PP2A regulatory subunits), the striatin-associated proteins MOB4, STRIP1 and STRIP2, PDCD10 and members of the STE20 kinases, such as STK24 and STK26. Interacts with CTTNBP2; this interaction may regulate dendritic spine distribution of STRN. Activation of glutamate receptors weakens the interaction with CTTNBP2. In terms of tissue distribution, mainly expressed in brain but is also expressed at low levels in various tissues such as kidney, spleen, skeletal muscle and lung.

It localises to the cytoplasm. The protein localises to the membrane. Its subcellular location is the cell projection. It is found in the dendritic spine. Its function is as follows. Calmodulin-binding scaffolding protein which is the center of the striatin-interacting phosphatase and kinase (STRIPAK) complexes. STRIPAK complexes have critical roles in protein (de)phosphorylation and are regulators of multiple signaling pathways including Hippo, MAPK, nuclear receptor and cytoskeleton remodeling. Different types of STRIPAK complexes are involved in a variety of biological processes such as cell growth, differentiation, apoptosis, metabolism and immune regulation. This chain is Striatin (Strn), found in Mus musculus (Mouse).